Reading from the N-terminus, the 542-residue chain is MAAKEVKFQADARERMLRGVDVLANAVKVTLGPKGRNVVIDKSFGAPRITKDGVSVAKEIELEDKFENMGAQMLREVASKTNDLAGDGTTTATVLAQAIVREGAKAIASGMNPMDLKRGIDLAVDAVVKELKSNARKISQNSEIAQVGTISANGDTEIGRYLAEAMEKVGNEGVITVEEAKTSDTELEVVEGMQFDRGYLSPYFVTNQDKMRVELEDPYILIHEKKLSNLQSILPVLEAVVQSGKPLLIIAEDVEGEALATLVVNKLRGGLKVAAVKAPGFGDRRKAMLEDIAILTGGTVVSEDLGIMLENVTLEMLGRAKKVSIEKENTTIIDGAGSKTEIEGRTAQIRAQIEETTSDYDREKLQERLAKLAGGVAVIRVGGSTEVEVKEKKDRVDDALHATRAAVEEGILPGGGIALLRAVNALDGLKTANDDQRVGIEIVRRAIEAPVRQIAENAGAEGSIIVGKLREKVEFSYGWNAQTNEYGDLYTMGVIDPVKVVRTALQDAASVAGLLVTTEAMIAEKPKKESTPALPAGGGMDF.

ATP is bound by residues 30 to 33 (TLGP), lysine 51, 87 to 91 (DGTTT), glycine 415, and aspartate 496.

It belongs to the chaperonin (HSP60) family. As to quaternary structure, forms a cylinder of 14 subunits composed of two heptameric rings stacked back-to-back. Interacts with the co-chaperonin GroES.

Its subcellular location is the cytoplasm. The enzyme catalyses ATP + H2O + a folded polypeptide = ADP + phosphate + an unfolded polypeptide.. Functionally, together with its co-chaperonin GroES, plays an essential role in assisting protein folding. The GroEL-GroES system forms a nano-cage that allows encapsulation of the non-native substrate proteins and provides a physical environment optimized to promote and accelerate protein folding. The polypeptide is Chaperonin GroEL 3 (Sinorhizobium medicae (strain WSM419) (Ensifer medicae)).